The following is a 307-amino-acid chain: Tyrosine recombinase XerC (307 aa).

The Core-binding (CB) domain occupies 9 to 95; it reads ETLSLAIDSF…ALRSFLDWQV (87 aa). Positions 116 to 296 constitute a Tyr recombinase domain; it reads HLPKNMDVDE…DFQHLAKVYD (181 aa). Catalysis depends on residues Arg155, Lys179, His248, Arg251, and His274. The O-(3'-phospho-DNA)-tyrosine intermediate role is filled by Tyr283.

It belongs to the 'phage' integrase family. XerC subfamily. As to quaternary structure, forms a cyclic heterotetrameric complex composed of two molecules of XerC and two molecules of XerD, in which XerC interacts with XerD via its C-terminal region, XerD interacts with XerC via its C-terminal region and so on.

The protein localises to the cytoplasm. Its activity is regulated as follows. FtsK may regulate the catalytic switch between XerC and XerD in the heterotetrameric complex during the two steps of the recombination process. In terms of biological role, site-specific tyrosine recombinase, which acts by catalyzing the cutting and rejoining of the recombining DNA molecules. Binds cooperatively to specific DNA consensus sequences that are separated from XerD binding sites by a short central region, forming the heterotetrameric XerC-XerD complex that recombines DNA substrates. The complex is essential to convert dimers of the bacterial chromosome into monomers to permit their segregation at cell division. It also contributes to the segregational stability of plasmids. In the complex XerC specifically exchanges the top DNA strands. The polypeptide is Tyrosine recombinase XerC (Proteus mirabilis).